Here is a 70-residue protein sequence, read N- to C-terminus: Small ribosomal subunit protein bS21 (70 aa).

This sequence belongs to the bacterial ribosomal protein bS21 family.

This Campylobacter hominis (strain ATCC BAA-381 / DSM 21671 / CCUG 45161 / LMG 19568 / NCTC 13146 / CH001A) protein is Small ribosomal subunit protein bS21.